The primary structure comprises 1132 residues: DNA topoisomerase 2 (1132 aa).

ATP-binding positions include Asn68, Asn100, 137–139 (SSN), and 150–157 (GKNGLGVK). The interaction with DNA stretch occupies residues 327 to 329 (NKP). 363–365 (QNK) contributes to the ATP binding site. A Toprim domain is found at 442–577 (CTLIVCEGLS…NLKDFPFISS (136 aa)). Residues Glu448, Asp538, and Asp540 each coordinate Mg(2+). One can recognise a Topo IIA-type catalytic domain in the interval 713–1125 (LPHLIDGLKE…NEGQMWLKDI (413 aa)). The active-site O-(5'-phospho-DNA)-tyrosine intermediate is Tyr803. The interval 979-988 (KLRSYIHTSN) is interaction with DNA.

Belongs to the type II topoisomerase family. The cofactor is Mg(2+). Mn(2+) serves as cofactor. It depends on Ca(2+) as a cofactor.

It catalyses the reaction ATP-dependent breakage, passage and rejoining of double-stranded DNA.. In terms of biological role, can introduce negative superhelical turns into double-stranded circular DNA. In Acheta domesticus (House cricket), this protein is DNA topoisomerase 2 (TOP2).